A 560-amino-acid chain; its full sequence is Dihydroxy-acid dehydratase (560 aa).

The interval 1–20 is disordered; it reads MGDNLKKRSSMTTDGDNRAP. [2Fe-2S] cluster is bound at residue cysteine 52. Aspartate 84 provides a ligand contact to Mg(2+). Cysteine 125 is a [2Fe-2S] cluster binding site. Aspartate 126 and lysine 127 together coordinate Mg(2+). Lysine 127 is subject to N6-carboxylysine. Cysteine 197 provides a ligand contact to [2Fe-2S] cluster. Residue glutamate 448 coordinates Mg(2+). Serine 474 serves as the catalytic Proton acceptor.

Belongs to the IlvD/Edd family. As to quaternary structure, homodimer. It depends on [2Fe-2S] cluster as a cofactor. Mg(2+) is required as a cofactor.

It catalyses the reaction (2R)-2,3-dihydroxy-3-methylbutanoate = 3-methyl-2-oxobutanoate + H2O. It carries out the reaction (2R,3R)-2,3-dihydroxy-3-methylpentanoate = (S)-3-methyl-2-oxopentanoate + H2O. Its pathway is amino-acid biosynthesis; L-isoleucine biosynthesis; L-isoleucine from 2-oxobutanoate: step 3/4. It functions in the pathway amino-acid biosynthesis; L-valine biosynthesis; L-valine from pyruvate: step 3/4. Functionally, functions in the biosynthesis of branched-chain amino acids. Catalyzes the dehydration of (2R,3R)-2,3-dihydroxy-3-methylpentanoate (2,3-dihydroxy-3-methylvalerate) into 2-oxo-3-methylpentanoate (2-oxo-3-methylvalerate) and of (2R)-2,3-dihydroxy-3-methylbutanoate (2,3-dihydroxyisovalerate) into 2-oxo-3-methylbutanoate (2-oxoisovalerate), the penultimate precursor to L-isoleucine and L-valine, respectively. The chain is Dihydroxy-acid dehydratase from Leptospira interrogans serogroup Icterohaemorrhagiae serovar Lai (strain 56601).